The following is a 423-amino-acid chain: AP-1 complex subunit mu-2 (423 aa).

The region spanning 168-421 is the MHD domain; it reads KNEVFIDVIE…ITQSGDYQLR (254 aa).

This sequence belongs to the adaptor complexes medium subunit family. As to quaternary structure, adaptor protein complex 1 (AP-1) is a heterotetramer composed of two large adaptins (gamma-type subunit AP1G1 and beta-type subunit AP1B1), a medium adaptin (mu-type subunit AP1M1 or AP1M2) and a small adaptin (sigma-type subunit AP1S1 or AP1S2 or AP1S3). Interacts with P2X4. Phosphorylation of membrane-bound AP1M1/AP1M2 increases its affinity for sorting signals.

Its subcellular location is the golgi apparatus. The protein resides in the cytoplasmic vesicle. The protein localises to the clathrin-coated vesicle membrane. Its function is as follows. Subunit of clathrin-associated adaptor protein complex 1 that plays a role in protein sorting in the trans-Golgi network (TGN) and endosomes. The AP complexes mediate the recruitment of clathrin to membranes and the recognition of sorting signals within the cytosolic tails of transmembrane cargo molecules. This Rattus norvegicus (Rat) protein is AP-1 complex subunit mu-2 (Ap1m2).